We begin with the raw amino-acid sequence, 342 residues long: Protein FDO1 (342 aa).

Disordered stretches follow at residues 1–36 (MEEN…NGSD), 57–76 (MSPM…TLSV), and 299–322 (GRTI…GNRT). Positions 15 to 25 (ATWSNQMGSPE) are enriched in polar residues. Positions 308 to 319 (NTKDESIQDSHG) are enriched in basic and acidic residues.

Interacts with FKH1.

In concert with FKH1, plays a role in directionality of mating type switching by controlling which donor mating-type locus is inserted into MAT locus during mating type switching. In Saccharomyces cerevisiae (strain ATCC 204508 / S288c) (Baker's yeast), this protein is Protein FDO1.